We begin with the raw amino-acid sequence, 262 residues long: 4-hydroxy-2-oxo-heptane-1,7-dioate aldolase (262 aa).

His45 acts as the Proton acceptor in catalysis. Substrate is bound at residue Gln147. Glu149 contributes to the a divalent metal cation binding site. Substrate-binding residues include Ala174 and Asp175. Residue Asp175 coordinates a divalent metal cation.

It belongs to the HpcH/HpaI aldolase family. In terms of assembly, homohexamer; trimer of dimers. It depends on a divalent metal cation as a cofactor.

It carries out the reaction 4-hydroxy-2-oxoheptanedioate = succinate semialdehyde + pyruvate. Its pathway is aromatic compound metabolism; 4-hydroxyphenylacetate degradation; pyruvate and succinate semialdehyde from 4-hydroxyphenylacetate: step 7/7. Functionally, catalyzes the reversible retro-aldol cleavage of 4-hydroxy-2-ketoheptane-1,7-dioate (HKHD) to pyruvate and succinic semialdehyde. In Shigella boydii serotype 18 (strain CDC 3083-94 / BS512), this protein is 4-hydroxy-2-oxo-heptane-1,7-dioate aldolase.